The chain runs to 517 residues: ATP synthase subunit alpha 2 (517 aa).

173 to 180 contributes to the ATP binding site; that stretch reads GDRQTGKT.

Belongs to the ATPase alpha/beta chains family. F-type ATPases have 2 components, CF(1) - the catalytic core - and CF(0) - the membrane proton channel. CF(1) has five subunits: alpha(3), beta(3), gamma(1), delta(1), epsilon(1). CF(0) has three main subunits: a(1), b(2) and c(9-12). The alpha and beta chains form an alternating ring which encloses part of the gamma chain. CF(1) is attached to CF(0) by a central stalk formed by the gamma and epsilon chains, while a peripheral stalk is formed by the delta and b chains.

Its subcellular location is the cell inner membrane. The enzyme catalyses ATP + H2O + 4 H(+)(in) = ADP + phosphate + 5 H(+)(out). Its function is as follows. Produces ATP from ADP in the presence of a proton gradient across the membrane. The alpha chain is a regulatory subunit. The sequence is that of ATP synthase subunit alpha 2 from Legionella pneumophila (strain Corby).